We begin with the raw amino-acid sequence, 114 residues long: Flagellar hook-basal body complex protein FliE (114 aa).

This sequence belongs to the FliE family.

It localises to the bacterial flagellum basal body. In Desulfitobacterium hafniense (strain Y51), this protein is Flagellar hook-basal body complex protein FliE.